Consider the following 184-residue polypeptide: MAECPTDLINEMFLRLRATTLKKCRVLSKPCFSLIDSPEKRVIERSDSPPPPLGFNNHLLPLANAYDDDDEEEGNELKKSQARRNGVAKGEGNGNKVNGEAQEEVDDEEDDDDDASKGRGKHSRHVEVRRDCPYLDTVNRQVIIIDQFLMLRVPLATMRKRMRTGGRKAKAMEKYLKKVLKKSG.

The region spanning 1-46 (MAECPTDLINEMFLRLRATTLKKCRVLSKPCFSLIDSPEKRVIERS) is the F-box domain. The disordered stretch occupies residues 68–126 (DDDEEEGNELKKSQARRNGVAKGEGNGNKVNGEAQEEVDDEEDDDDDASKGRGKHSRHV). Over residues 85–100 (NGVAKGEGNGNKVNGE) the composition is skewed to low complexity. The segment covering 101–114 (AQEEVDDEEDDDDD) has biased composition (acidic residues).

In Arabidopsis thaliana (Mouse-ear cress), this protein is Putative F-box protein At4g22420.